The primary structure comprises 133 residues: Interferon alpha-inducible protein 27-like protein 2 (133 aa).

3 helical membrane passes run 8 to 28, 51 to 71, and 73 to 93; these read AAIG…AVGF, GGGV…AAGL, and TSSN…LGGA. A disordered region spans residues 93-133; sequence AKRASPSPPPGGPRPEGEQPGENVPQVEPPKSPLGPEKHEK.

Belongs to the IFI6/IFI27 family.

The protein resides in the mitochondrion membrane. In terms of biological role, plays a role in the apoptotic process and has a pro-apoptotic activity. The polypeptide is Interferon alpha-inducible protein 27-like protein 2 (Bos taurus (Bovine)).